Reading from the N-terminus, the 155-residue chain is Transcription antitermination protein NusB (155 aa).

Belongs to the NusB family.

Its function is as follows. Involved in transcription antitermination. Required for transcription of ribosomal RNA (rRNA) genes. Binds specifically to the boxA antiterminator sequence of the ribosomal RNA (rrn) operons. The polypeptide is Transcription antitermination protein NusB (Vibrio vulnificus (strain CMCP6)).